The following is a 123-amino-acid chain: Large ribosomal subunit protein uL18 (123 aa).

The protein belongs to the universal ribosomal protein uL18 family. Part of the 50S ribosomal subunit; part of the 5S rRNA/L5/L18/L25 subcomplex. Contacts the 5S and 23S rRNAs.

Functionally, this is one of the proteins that bind and probably mediate the attachment of the 5S RNA into the large ribosomal subunit, where it forms part of the central protuberance. The chain is Large ribosomal subunit protein uL18 from Chlamydia felis (strain Fe/C-56) (Chlamydophila felis).